The primary structure comprises 146 residues: MFRGTSYHRIDPKGRIVIPSRFRDLIGADGTAMITFFEGGLYAYTLEEWSKIEAKMVMLEKKGNQMRRFRRFFIGRASECQPDKQWRLLIPPELRQDAGLEEEIVLIGISDHFEIWSRAKWEEQKNLHEDDMNDEDFQNEIEKLGL.

2 SpoVT-AbrB domains span residues 5–48 (TSYH…TLEE) and 77–120 (ASEC…SRAK).

The protein belongs to the MraZ family. Forms oligomers.

The protein localises to the cytoplasm. It is found in the nucleoid. The sequence is that of Transcriptional regulator MraZ from Desulfosudis oleivorans (strain DSM 6200 / JCM 39069 / Hxd3) (Desulfococcus oleovorans).